A 322-amino-acid chain; its full sequence is 4-diphosphocytidyl-2-C-methyl-D-erythritol kinase (322 aa).

Lys-25 is a catalytic residue. 110 to 120 (PVAGGMAGGSA) is a binding site for ATP. Asp-152 is a catalytic residue.

Belongs to the GHMP kinase family. IspE subfamily.

It carries out the reaction 4-CDP-2-C-methyl-D-erythritol + ATP = 4-CDP-2-C-methyl-D-erythritol 2-phosphate + ADP + H(+). The protein operates within isoprenoid biosynthesis; isopentenyl diphosphate biosynthesis via DXP pathway; isopentenyl diphosphate from 1-deoxy-D-xylulose 5-phosphate: step 3/6. In terms of biological role, catalyzes the phosphorylation of the position 2 hydroxy group of 4-diphosphocytidyl-2C-methyl-D-erythritol. The polypeptide is 4-diphosphocytidyl-2-C-methyl-D-erythritol kinase (Mycolicibacterium gilvum (strain PYR-GCK) (Mycobacterium gilvum (strain PYR-GCK))).